The primary structure comprises 397 residues: Xylose isomerase (397 aa).

Catalysis depends on residues histidine 54 and aspartate 57. The Mg(2+) site is built by glutamate 181, glutamate 217, histidine 220, aspartate 245, aspartate 255, aspartate 257, and aspartate 293.

It belongs to the xylose isomerase family. Homotetramer. Requires Mg(2+) as cofactor.

It localises to the cytoplasm. The enzyme catalyses alpha-D-xylose = alpha-D-xylulofuranose. This is Xylose isomerase from Clavibacter sepedonicus (Clavibacter michiganensis subsp. sepedonicus).